The sequence spans 188 residues: Large ribosomal subunit protein eL18z (188 aa).

It belongs to the eukaryotic ribosomal protein eL18 family.

This Arabidopsis thaliana (Mouse-ear cress) protein is Large ribosomal subunit protein eL18z (RPL18A).